The following is a 726-amino-acid chain: Dipeptidyl-peptidase 5 (726 aa).

Positions 1–19 (MAAAKWLIASLAFASSGLA) are cleaved as a signal peptide. 2 N-linked (GlcNAc...) asparagine glycosylation sites follow: Asn96 and Asn252. A disordered region spans residues 269–291 (AEPINKRNGPRTPQGIEGASSSP). Ser558 functions as the Charge relay system in the catalytic mechanism. N-linked (GlcNAc...) asparagine glycosylation is present at Asn605. Residues Asp641 and His673 each act as charge relay system in the active site. The N-linked (GlcNAc...) asparagine glycan is linked to Asn699.

It belongs to the peptidase S9C family.

The protein localises to the secreted. In terms of biological role, extracellular dipeptidyl-peptidase which removes N-terminal dipeptides sequentially from polypeptides having unsubstituted N-termini. Contributes to pathogenicity. The chain is Dipeptidyl-peptidase 5 (DPP5) from Trichophyton tonsurans (Scalp ringworm fungus).